Reading from the N-terminus, the 363-residue chain is MQAFLKGTSISTKPPLTKDRGVAASAGSSGENKKAKPVPWVEKYRPKCVDEVAFQEEVVAVLKKSLEGADLPNLLFYGPPGTGKTSTILAAARELFGPELFRLRVLELNASDERGIQVVREKVKNFAQLTVSGSRSDGKPCPPFKIVILDEADSMTSAAQAALRRTMEKESKTTRFCLICNYVSRIIEPLTSRCSKFRFKPLSDKIQQQRLLDIAKKENVKISDEGIAYLVKVSEGDLRKAITFLQSATRLTGGKEITEKVITDIAGVIPAEKIDGVFAACQSGSFDKLEAVVKDLIDEGHAATQLVNQLHDVVVENNLSDKQKSIITEKLAEVDKCLADGADEHLQLISLCATVMQQLSQNC.

Met1 is subject to N-acetylmethionine. Positions 1–36 are disordered; the sequence is MQAFLKGTSISTKPPLTKDRGVAASAGSSGENKKAK. 2 positions are modified to N6-acetyllysine: Lys6 and Lys13. Position 78–85 (78–85) interacts with ATP; that stretch reads GPPGTGKT.

It belongs to the activator 1 small subunits family. In terms of assembly, subunit of the RFC complex, an heteropentameric complex consisting of a large subunit RFC1 and four small subunits RFC2, RFC3, RFC4 and RFC5; the RFC complex interacts with PCNA. Forms an heterotetrameric complex with RFC2, RFC3 and RFC5; this complex has ATPase activity but is not stimulated by PCNA. The heterotetramer of subunits RFC2, RFC3, RFC4 and RFC5 interacts with RAD17. Interacts with ATAD5. Interacts with CTF18. Interacts with CNTD1; this interaction facilitates crossover formation.

The protein localises to the nucleus. Functionally, subunit of the replication factor C (RFC) complex which acts during elongation of primed DNA templates by DNA polymerases delta and epsilon, and is necessary for ATP-dependent loading of proliferating cell nuclear antigen (PCNA) onto primed DNA. The RFC4 subunit probably functions as a scaffold on which the other complex components can assemble. The chain is Replication factor C subunit 4 (RFC4) from Homo sapiens (Human).